A 167-amino-acid chain; its full sequence is NAD(P)H-quinone oxidoreductase subunit I, chloroplastic (167 aa).

4Fe-4S ferredoxin-type domains are found at residues 55–84 (GRIH…VDWK) and 95–124 (LNYS…MTEE). The [4Fe-4S] cluster site is built by Cys64, Cys67, Cys70, Cys74, Cys104, Cys107, Cys110, and Cys114.

The protein belongs to the complex I 23 kDa subunit family. As to quaternary structure, NDH is composed of at least 16 different subunits, 5 of which are encoded in the nucleus. The cofactor is [4Fe-4S] cluster.

The protein localises to the plastid. It localises to the chloroplast thylakoid membrane. It catalyses the reaction a plastoquinone + NADH + (n+1) H(+)(in) = a plastoquinol + NAD(+) + n H(+)(out). The catalysed reaction is a plastoquinone + NADPH + (n+1) H(+)(in) = a plastoquinol + NADP(+) + n H(+)(out). Its function is as follows. NDH shuttles electrons from NAD(P)H:plastoquinone, via FMN and iron-sulfur (Fe-S) centers, to quinones in the photosynthetic chain and possibly in a chloroplast respiratory chain. The immediate electron acceptor for the enzyme in this species is believed to be plastoquinone. Couples the redox reaction to proton translocation, and thus conserves the redox energy in a proton gradient. This chain is NAD(P)H-quinone oxidoreductase subunit I, chloroplastic, found in Aethionema grandiflorum (Persian stone-cress).